Consider the following 501-residue polypeptide: Protein anon-37Cs (501 aa).

The protein localises to the cytoplasm. Functionally, has a non-vital function. The chain is Protein anon-37Cs (anon-37Cs) from Drosophila simulans (Fruit fly).